Reading from the N-terminus, the 142-residue chain is Large ribosomal subunit protein uL13 (142 aa).

It belongs to the universal ribosomal protein uL13 family. As to quaternary structure, part of the 50S ribosomal subunit.

Its function is as follows. This protein is one of the early assembly proteins of the 50S ribosomal subunit, although it is not seen to bind rRNA by itself. It is important during the early stages of 50S assembly. The protein is Large ribosomal subunit protein uL13 of Erwinia tasmaniensis (strain DSM 17950 / CFBP 7177 / CIP 109463 / NCPPB 4357 / Et1/99).